The primary structure comprises 336 residues: uncharacterized protein (336 aa).

Belongs to the GppA/Ppx family.

This is an uncharacterized protein from Streptomyces coelicolor (strain ATCC BAA-471 / A3(2) / M145).